A 1205-amino-acid chain; its full sequence is Transcriptional-regulating factor 1 (1205 aa).

Disordered regions lie at residues 201 to 226 (YQQVPQQPHPGFTGGLPKPALPVGQH), 270 to 317 (YPQP…QRQS), 332 to 351 (QHLQEQQQPSMHLQPPSYHR), 390 to 500 (PQSH…QTKG), 527 to 583 (LNGH…PEAE), and 601 to 629 (PKPSSQGFTNSVAATPAARDKPASSMSDD). Low complexity-rich tracts occupy residues 291-317 (QQQQQPQQIRPSPPQQQQQLQLQQRQS) and 332-342 (QHLQEQQQPSM). 3 stretches are compositionally biased toward polar residues: residues 406 to 417 (KTYSSDRQTPAM), 437 to 447 (SEMTRVTSTLP), and 487 to 498 (QSGSPESSSGQT). A Phosphoserine modification is found at Ser-490. The C2H2-type 1 zinc finger occupies 512 to 534 (LTCSICLKEFKSLPALNGHMRSH). The segment covering 551-579 (APPPQPQPQPQPQQPLPPPPPPPPPPQLP) has biased composition (pro residues). Over residues 604–613 (SSQGFTNSVA) the composition is skewed to polar residues. Lys-639 and Lys-646 each carry N6-acetyllysine. A Phosphothreonine modification is found at Thr-773. An ELM2 domain is found at 785 to 876 (PRINIGLRFQ…ATLEMLLLRK (92 aa)). The SANT domain occupies 891–942 (AGSDKWTSLERKLFNKALATYSKDFIFVQKMVKSKTVAQCVEYYYTWKKIMR). Positions 956 to 975 (DDCMTSEEEEEAEEEEEDPE) are enriched in acidic residues. Disordered regions lie at residues 956–1016 (DDCM…QQPS) and 1043–1087 (HGGT…GETD). Thr-960 is subject to Phosphothreonine. Ser-961 carries the post-translational modification Phosphoserine. Over residues 976-990 (EDRKSIKEEESEVAK) the composition is skewed to basic and acidic residues. The C2H2-type 2 zinc-finger motif lies at 1019 to 1043 (FICEMPNCGAVFSSRQALNGHARIH). Positions 1072 to 1086 (SVKSSPSHSTTSGET) are enriched in low complexity. The segment at 1092–1114 (FPCKECGKVFFKIKSRNAHMKTH) adopts a C2H2-type 3 zinc-finger fold.

As to quaternary structure, interacts with CREBBP and EP300. Interacts with DNTTIP1 and DNTT. Highly expressed in kidney, lung and brain. In the brain, expression was seen in the basal ganglia, hippocampus, piriform cortex, cerebral cortex, ventromedial nucleus of the hypothalamus and the dorsal and superior central nuclei of the raphe.

The protein resides in the nucleus. Binds DNA and activates transcription of CYP11A1. Interaction with CREBBP and EP300 results in a synergistic transcriptional activation of CYP11A1. This Mus musculus (Mouse) protein is Transcriptional-regulating factor 1 (Trerf1).